The sequence spans 267 residues: Orotidine 5'-phosphate decarboxylase (267 aa).

Residues Asp-40, 62 to 64 (KTH), 93 to 102 (DRKFADIGNT), Tyr-215, and Arg-234 contribute to the substrate site. The Proton donor role is filled by Lys-95.

Belongs to the OMP decarboxylase family.

It carries out the reaction orotidine 5'-phosphate + H(+) = UMP + CO2. It participates in pyrimidine metabolism; UMP biosynthesis via de novo pathway; UMP from orotate: step 2/2. The polypeptide is Orotidine 5'-phosphate decarboxylase (pyrG) (Phycomyces blakesleeanus (strain ATCC 8743b / DSM 1359 / FGSC 10004 / NBRC 33097 / NRRL 1555)).